A 375-amino-acid polypeptide reads, in one-letter code: Chaperone protein DnaJ (375 aa).

The J domain maps to 5 to 70 (DYYDVLGVNR…QKRGAYDQFG (66 aa)). A CR-type zinc finger spans residues 135–213 (GCEKQIRIPS…CHGAGQKKTT (79 aa)). Positions 148, 151, 165, 168, 187, 190, 201, and 204 each coordinate Zn(2+). CXXCXGXG motif repeat units follow at residues 148–155 (CSTCNGTG), 165–172 (CATCGGHG), 187–194 (CPTCHGTG), and 201–208 (CGSCHGAG).

The protein belongs to the DnaJ family. In terms of assembly, homodimer. Zn(2+) is required as a cofactor.

It localises to the cytoplasm. Its function is as follows. Participates actively in the response to hyperosmotic and heat shock by preventing the aggregation of stress-denatured proteins and by disaggregating proteins, also in an autonomous, DnaK-independent fashion. Unfolded proteins bind initially to DnaJ; upon interaction with the DnaJ-bound protein, DnaK hydrolyzes its bound ATP, resulting in the formation of a stable complex. GrpE releases ADP from DnaK; ATP binding to DnaK triggers the release of the substrate protein, thus completing the reaction cycle. Several rounds of ATP-dependent interactions between DnaJ, DnaK and GrpE are required for fully efficient folding. Also involved, together with DnaK and GrpE, in the DNA replication of plasmids through activation of initiation proteins. This chain is Chaperone protein DnaJ, found in Chromobacterium violaceum (strain ATCC 12472 / DSM 30191 / JCM 1249 / CCUG 213 / NBRC 12614 / NCIMB 9131 / NCTC 9757 / MK).